Here is a 478-residue protein sequence, read N- to C-terminus: Shikimate biosynthesis protein AroDE (478 aa).

The segment at 1-208 (MLCTIIRGPS…LNHHYFYNFT (208 aa)) is 3-dehydroquinate dehydratase. Residues Ser21, 29 to 31 (EMR), and 55 to 57 (TWK) each bind 3-dehydroquinate. The active-site Proton donor/acceptor; for 3-dehydroquinate dehydratase activity is His110. Catalysis depends on Lys133, which acts as the Schiff-base intermediate with substrate; for 3-dehydroquinate dehydratase activity. Residues Arg171 and Gln196 each contribute to the 3-dehydroquinate site. Residues 209-478 (NLSPQSQICA…VLASLFSIAA (270 aa)) form a shikimate 5-dehydrogenase region. Residue 226–228 (SIG) coordinates shikimate. Catalysis depends on Lys277, which acts as the Proton acceptor; for shikimate dehydrogenase activity. Residues Asn298 and Asp313 each coordinate shikimate. Residues 337–341 (GAGGA), 360–362 (NRT), and Gly435 contribute to the NADP(+) site. Gln442 is a binding site for shikimate.

This sequence in the N-terminal section; belongs to the type-I 3-dehydroquinase family. In the C-terminal section; belongs to the shikimate dehydrogenase family.

It catalyses the reaction 3-dehydroquinate = 3-dehydroshikimate + H2O. It carries out the reaction shikimate + NADP(+) = 3-dehydroshikimate + NADPH + H(+). It functions in the pathway metabolic intermediate biosynthesis; chorismate biosynthesis; chorismate from D-erythrose 4-phosphate and phosphoenolpyruvate: step 3/7. Its pathway is metabolic intermediate biosynthesis; chorismate biosynthesis; chorismate from D-erythrose 4-phosphate and phosphoenolpyruvate: step 4/7. Its function is as follows. Bifunctional enzyme that catalyzes two sequential steps of the aromatic amino acids biosynthetic pathway. In the first reaction, the AroD domain catalyzes the cis-dehydration of 3-dehydroquinate (DHQ) and introduces the first double bond of the aromatic ring to yield 3-dehydroshikimate; in the second reaction, the AroE domain catalyzes the reversible NADPH linked reduction of 3-dehydroshikimate (DHSA) to yield shikimate (SA). This chain is Shikimate biosynthesis protein AroDE, found in Chlamydia muridarum (strain MoPn / Nigg).